Consider the following 445-residue polypeptide: tRNA-2-methylthio-N(6)-dimethylallyladenosine synthase (445 aa).

The MTTase N-terminal domain maps to 2–117; it reads QGLYIKSYGC…LPELIVKARK (116 aa). [4Fe-4S] cluster contacts are provided by Cys-11, Cys-47, Cys-80, Cys-157, Cys-161, and Cys-164. In terms of domain architecture, Radical SAM core spans 143–374; it reads KNQKVSAFIS…QELVHKQQLE (232 aa). In terms of domain architecture, TRAM spans 377 to 441; it reads KKMIGETHPV…KNHLTGIIPN (65 aa).

This sequence belongs to the methylthiotransferase family. MiaB subfamily. Monomer. [4Fe-4S] cluster is required as a cofactor.

The protein localises to the cytoplasm. The catalysed reaction is N(6)-dimethylallyladenosine(37) in tRNA + (sulfur carrier)-SH + AH2 + 2 S-adenosyl-L-methionine = 2-methylsulfanyl-N(6)-dimethylallyladenosine(37) in tRNA + (sulfur carrier)-H + 5'-deoxyadenosine + L-methionine + A + S-adenosyl-L-homocysteine + 2 H(+). In terms of biological role, catalyzes the methylthiolation of N6-(dimethylallyl)adenosine (i(6)A), leading to the formation of 2-methylthio-N6-(dimethylallyl)adenosine (ms(2)i(6)A) at position 37 in tRNAs that read codons beginning with uridine. This chain is tRNA-2-methylthio-N(6)-dimethylallyladenosine synthase, found in Ehrlichia ruminantium (strain Welgevonden).